Consider the following 1180-residue polypeptide: IQ domain-containing protein N (1180 aa).

Positions 34 to 78 (HPPAPAHPSLLDKMEKAPPQPQHEGLKSKEHLPQQPAEGKTASRR) are disordered. Residues 103–132 (HARAATLIQANWRGYWLRQKLISQMMAAKA) form the IQ 1 domain. Disordered regions lie at residues 283 to 324 (RVSA…ETPK), 476 to 496 (MSKTSSQRSPVGVTKPSPQTR), and 786 to 820 (QRLGGLSAPPWAKPEDRQTQPQPHGHVPGKTTQGG). IQ domains are found at residues 926 to 955 (RILAVITIQAGVRGYLARRRIRLWHRGAMV), 956 to 978 (IQATWRGYRVRRNLAHLCRATTT), 979 to 1001 (IQSAWRGYSTRRDQARHWQMLHP), 1113 to 1142 (QDKAATAIQSAWRGFKIRQQMRQQQMAAKI), and 1143 to 1165 (VQATWRGHHTRSCLKNTEALLGP).

As to quaternary structure, interacts with calmodulin.

Its function is as follows. Essential for spermiogenesis and fertilization. May be required for manchette assembly in elongating spermatids. The sequence is that of IQ domain-containing protein N from Homo sapiens (Human).